Reading from the N-terminus, the 168-residue chain is MALNLEDKKAVVAEVTAQVAKASTIVVAEYRGITVGDLTKLRAQARQQGVYLRVLKNTLARRAVEGTPFAELAEQMTGPLIYGISEDAVAPAKVLNDFAKGNDKLVLRAGSYEGKVLDAAGVKALASIPSREELLSKLLFVMQAPVSGFARALAALAEKKQSEEGAAA.

This sequence belongs to the universal ribosomal protein uL10 family. As to quaternary structure, part of the ribosomal stalk of the 50S ribosomal subunit. The N-terminus interacts with L11 and the large rRNA to form the base of the stalk. The C-terminus forms an elongated spine to which L12 dimers bind in a sequential fashion forming a multimeric L10(L12)X complex.

Functionally, forms part of the ribosomal stalk, playing a central role in the interaction of the ribosome with GTP-bound translation factors. The protein is Large ribosomal subunit protein uL10 of Ralstonia nicotianae (strain ATCC BAA-1114 / GMI1000) (Ralstonia solanacearum).